The primary structure comprises 309 residues: Putative lipid kinase YtlR (309 aa).

In terms of domain architecture, DAGKc spans 1-134 (MSHWFFIINP…FHLGSVNFLQ (134 aa)). ATP is bound by residues 9-13 (NPTAG), threonine 40, and 69-75 (GDGTMHE). Mg(2+) contacts are provided by asparagine 229, glutamate 232, and threonine 234. Glutamate 289 acts as the Proton acceptor in catalysis.

It belongs to the diacylglycerol/lipid kinase family. It depends on Mg(2+) as a cofactor.

Its function is as follows. May catalyze the ATP-dependent phosphorylation of lipids other than diacylglycerol (DAG). In fact, is not able to exhibit diacylglycerol kinase activity in vitro. The sequence is that of Putative lipid kinase YtlR (ytlR) from Bacillus subtilis (strain 168).